The chain runs to 1342 residues: DNA-directed RNA polymerase subunit beta (1342 aa).

It belongs to the RNA polymerase beta chain family. As to quaternary structure, the RNAP catalytic core consists of 2 alpha, 1 beta, 1 beta' and 1 omega subunit. When a sigma factor is associated with the core the holoenzyme is formed, which can initiate transcription.

It catalyses the reaction RNA(n) + a ribonucleoside 5'-triphosphate = RNA(n+1) + diphosphate. DNA-dependent RNA polymerase catalyzes the transcription of DNA into RNA using the four ribonucleoside triphosphates as substrates. This chain is DNA-directed RNA polymerase subunit beta, found in Salmonella choleraesuis (strain SC-B67).